The following is a 114-amino-acid chain: Protein D2 (114 aa).

This sequence belongs to the phosphatidylethanolamine-binding protein family.

The sequence is that of Protein D2 (D2) from Onchocerca volvulus.